The following is a 59-amino-acid chain: UPF0434 protein HEAR2489 (59 aa).

It belongs to the UPF0434 family.

In Herminiimonas arsenicoxydans, this protein is UPF0434 protein HEAR2489.